The chain runs to 429 residues: Glucose-1-phosphate adenylyltransferase (429 aa).

Alpha-D-glucose 1-phosphate-binding positions include Gly-162, 177-178, and Ser-209; that span reads EK.

The protein belongs to the bacterial/plant glucose-1-phosphate adenylyltransferase family. As to quaternary structure, homotetramer.

It catalyses the reaction alpha-D-glucose 1-phosphate + ATP + H(+) = ADP-alpha-D-glucose + diphosphate. It participates in glycan biosynthesis; glycogen biosynthesis. Functionally, involved in the biosynthesis of ADP-glucose, a building block required for the elongation reactions to produce glycogen. Catalyzes the reaction between ATP and alpha-D-glucose 1-phosphate (G1P) to produce pyrophosphate and ADP-Glc. This is Glucose-1-phosphate adenylyltransferase from Rippkaea orientalis (strain PCC 8801 / RF-1) (Cyanothece sp. (strain PCC 8801)).